The chain runs to 303 residues: 4-hydroxy-3-methylbut-2-enyl diphosphate reductase (303 aa).

Cysteine 12 is a binding site for [4Fe-4S] cluster. 2 residues coordinate (2E)-4-hydroxy-3-methylbut-2-enyl diphosphate: histidine 42 and histidine 75. Residues histidine 42 and histidine 75 each contribute to the dimethylallyl diphosphate site. Positions 42 and 75 each coordinate isopentenyl diphosphate. Cysteine 97 provides a ligand contact to [4Fe-4S] cluster. Histidine 125 lines the (2E)-4-hydroxy-3-methylbut-2-enyl diphosphate pocket. Histidine 125 contributes to the dimethylallyl diphosphate binding site. Histidine 125 serves as a coordination point for isopentenyl diphosphate. Glutamate 127 functions as the Proton donor in the catalytic mechanism. Serine 164 contacts (2E)-4-hydroxy-3-methylbut-2-enyl diphosphate. Cysteine 192 is a [4Fe-4S] cluster binding site. Serine 220, serine 221, asparagine 222, and serine 264 together coordinate (2E)-4-hydroxy-3-methylbut-2-enyl diphosphate. Residues serine 220, serine 221, asparagine 222, and serine 264 each coordinate dimethylallyl diphosphate. Isopentenyl diphosphate-binding residues include serine 220, serine 221, asparagine 222, and serine 264.

It belongs to the IspH family. Requires [4Fe-4S] cluster as cofactor.

The enzyme catalyses isopentenyl diphosphate + 2 oxidized [2Fe-2S]-[ferredoxin] + H2O = (2E)-4-hydroxy-3-methylbut-2-enyl diphosphate + 2 reduced [2Fe-2S]-[ferredoxin] + 2 H(+). It catalyses the reaction dimethylallyl diphosphate + 2 oxidized [2Fe-2S]-[ferredoxin] + H2O = (2E)-4-hydroxy-3-methylbut-2-enyl diphosphate + 2 reduced [2Fe-2S]-[ferredoxin] + 2 H(+). The protein operates within isoprenoid biosynthesis; dimethylallyl diphosphate biosynthesis; dimethylallyl diphosphate from (2E)-4-hydroxy-3-methylbutenyl diphosphate: step 1/1. It participates in isoprenoid biosynthesis; isopentenyl diphosphate biosynthesis via DXP pathway; isopentenyl diphosphate from 1-deoxy-D-xylulose 5-phosphate: step 6/6. Catalyzes the conversion of 1-hydroxy-2-methyl-2-(E)-butenyl 4-diphosphate (HMBPP) into a mixture of isopentenyl diphosphate (IPP) and dimethylallyl diphosphate (DMAPP). Acts in the terminal step of the DOXP/MEP pathway for isoprenoid precursor biosynthesis. This Neorickettsia sennetsu (strain ATCC VR-367 / Miyayama) (Ehrlichia sennetsu) protein is 4-hydroxy-3-methylbut-2-enyl diphosphate reductase.